The following is a 459-amino-acid chain: ATP-dependent protease ATPase subunit HslU (459 aa).

ATP contacts are provided by residues V21, G63–E68, D273, E338, and R410.

It belongs to the ClpX chaperone family. HslU subfamily. As to quaternary structure, a double ring-shaped homohexamer of HslV is capped on each side by a ring-shaped HslU homohexamer. The assembly of the HslU/HslV complex is dependent on binding of ATP.

Its subcellular location is the cytoplasm. Its function is as follows. ATPase subunit of a proteasome-like degradation complex; this subunit has chaperone activity. The binding of ATP and its subsequent hydrolysis by HslU are essential for unfolding of protein substrates subsequently hydrolyzed by HslV. HslU recognizes the N-terminal part of its protein substrates and unfolds these before they are guided to HslV for hydrolysis. The polypeptide is ATP-dependent protease ATPase subunit HslU (Thermosipho africanus (strain TCF52B)).